A 698-amino-acid chain; its full sequence is Effector protein AvrPphDPgy (698 aa).

The segment covering 1 to 15 (MNPLRSIQHNITTPP) has biased composition (polar residues). Disordered stretches follow at residues 1–36 (MNPL…HPKR) and 171–200 (VDSS…DSDS). The span at 172 to 181 (DSSSPLLSSP) shows a compositional bias: low complexity.

The protein resides in the secreted. Effector protein involved in non-host recognition. The chain is Effector protein AvrPphDPgy (avrPphDPgy) from Pseudomonas savastanoi pv. glycinea (Pseudomonas syringae pv. glycinea).